We begin with the raw amino-acid sequence, 126 residues long: Putative lipoprotein LprD (126 aa).

A signal peptide spans 1–21 (MSTTRRRRPALIALVIIATCG). Cys-22 is lipidated: N-palmitoyl cysteine. Cys-22 carries S-diacylglycerol cysteine lipidation. The chain crosses the membrane as a helical span at residues 40–60 (FQNLGYALQWPLFAWFCVYAY). Positions 70–101 (PPQPPTGGAAAEIPAGLLPERPKPAQQPPDDP) are disordered.

It to M.leprae ML1177.

It localises to the cell membrane. The polypeptide is Putative lipoprotein LprD (lprD) (Mycobacterium tuberculosis (strain CDC 1551 / Oshkosh)).